Consider the following 553-residue polypeptide: Urocanate hydratase (553 aa).

Residues 45–46, Q123, 169–171, D189, R194, 235–236, 256–260, 266–267, Y315, and G485 each bind NAD(+); these read GG, GMG, NA, QTSAH, and YV.

It belongs to the urocanase family. NAD(+) is required as a cofactor.

It localises to the cytoplasm. It catalyses the reaction 4-imidazolone-5-propanoate = trans-urocanate + H2O. Its pathway is amino-acid degradation; L-histidine degradation into L-glutamate; N-formimidoyl-L-glutamate from L-histidine: step 2/3. Catalyzes the conversion of urocanate to 4-imidazolone-5-propionate. This Staphylococcus aureus (strain COL) protein is Urocanate hydratase.